A 2264-amino-acid polypeptide reads, in one-letter code: Protein Ycf2 (2264 aa).

Residue 1611–1618 (GSIGTGRS) coordinates ATP.

This sequence belongs to the Ycf2 family.

The protein localises to the plastid. The protein resides in the chloroplast stroma. Functionally, probable ATPase of unknown function. Its presence in a non-photosynthetic plant (Epifagus virginiana) and experiments in tobacco indicate that it has an essential function which is probably not related to photosynthesis. The polypeptide is Protein Ycf2 (Lactuca sativa (Garden lettuce)).